A 100-amino-acid polypeptide reads, in one-letter code: Tetrahydromethanopterin S-methyltransferase subunit B (100 aa).

A helical transmembrane segment spans residues 80–100 (KLTNIVYGFILGLIILFALLL).

This sequence belongs to the MtrB family. In terms of assembly, the complex is composed of 8 subunits; MtrA, MtrB, MtrC, MtrD, MtrE, MtrF, MtrG and MtrH.

It is found in the cell membrane. It carries out the reaction 5-methyl-5,6,7,8-tetrahydromethanopterin + coenzyme M + 2 Na(+)(in) = 5,6,7,8-tetrahydromethanopterin + methyl-coenzyme M + 2 Na(+)(out). It functions in the pathway one-carbon metabolism; methanogenesis from CO(2); methyl-coenzyme M from 5,10-methylene-5,6,7,8-tetrahydromethanopterin: step 2/2. In terms of biological role, part of a complex that catalyzes the formation of methyl-coenzyme M and tetrahydromethanopterin from coenzyme M and methyl-tetrahydromethanopterin. This is an energy-conserving, sodium-ion translocating step. In Methanothermobacter marburgensis (strain ATCC BAA-927 / DSM 2133 / JCM 14651 / NBRC 100331 / OCM 82 / Marburg) (Methanobacterium thermoautotrophicum), this protein is Tetrahydromethanopterin S-methyltransferase subunit B.